A 116-amino-acid chain; its full sequence is Large ribosomal subunit protein uL18 (116 aa).

It belongs to the universal ribosomal protein uL18 family. In terms of assembly, part of the 50S ribosomal subunit; part of the 5S rRNA/L5/L18/L25 subcomplex. Contacts the 5S and 23S rRNAs.

This is one of the proteins that bind and probably mediate the attachment of the 5S RNA into the large ribosomal subunit, where it forms part of the central protuberance. This chain is Large ribosomal subunit protein uL18, found in Shewanella frigidimarina (strain NCIMB 400).